Reading from the N-terminus, the 645-residue chain is Acetyl-coenzyme A synthetase (645 aa).

Residues 190 to 193 (RGGR) and Thr308 each bind CoA. Residues 384–386 (GEP), 408–413 (DTWWQT), Asp497, and Arg512 contribute to the ATP site. Ser520 contributes to the CoA binding site. Arg523 lines the ATP pocket. 3 residues coordinate Mg(2+): Val534, His536, and Val539. N6-acetyllysine is present on Lys606.

The protein belongs to the ATP-dependent AMP-binding enzyme family. It depends on Mg(2+) as a cofactor. Post-translationally, acetylated. Deacetylation by the SIR2-homolog deacetylase activates the enzyme.

It catalyses the reaction acetate + ATP + CoA = acetyl-CoA + AMP + diphosphate. Catalyzes the conversion of acetate into acetyl-CoA (AcCoA), an essential intermediate at the junction of anabolic and catabolic pathways. AcsA undergoes a two-step reaction. In the first half reaction, AcsA combines acetate with ATP to form acetyl-adenylate (AcAMP) intermediate. In the second half reaction, it can then transfer the acetyl group from AcAMP to the sulfhydryl group of CoA, forming the product AcCoA. The protein is Acetyl-coenzyme A synthetase of Halorhodospira halophila (strain DSM 244 / SL1) (Ectothiorhodospira halophila (strain DSM 244 / SL1)).